The sequence spans 366 residues: Histidinol-phosphate aminotransferase 2 (366 aa).

A compositionally biased stretch (polar residues) spans 1–11 (MQVKDQLSSLQ). The interval 1-21 (MQVKDQLSSLQPYKPGKSPEQ) is disordered. At lysine 222 the chain carries N6-(pyridoxal phosphate)lysine.

This sequence belongs to the class-II pyridoxal-phosphate-dependent aminotransferase family. Histidinol-phosphate aminotransferase subfamily. In terms of assembly, homodimer. Requires pyridoxal 5'-phosphate as cofactor.

The enzyme catalyses L-histidinol phosphate + 2-oxoglutarate = 3-(imidazol-4-yl)-2-oxopropyl phosphate + L-glutamate. Its pathway is amino-acid biosynthesis; L-histidine biosynthesis; L-histidine from 5-phospho-alpha-D-ribose 1-diphosphate: step 7/9. In Bacillus cereus (strain ATCC 14579 / DSM 31 / CCUG 7414 / JCM 2152 / NBRC 15305 / NCIMB 9373 / NCTC 2599 / NRRL B-3711), this protein is Histidinol-phosphate aminotransferase 2 (hisC2).